The chain runs to 336 residues: MQPAERSRVPRIDPYGFERPEDFDDAAYEKFFSSYLVTLTRRAIKWSRLLQGGGVPRSRTVKRYVRKGVPLEHRARVWMVLSGAQAQMDQNPGYYHQLLQGERNPRLEDAIRTDLNRTFPDNVKFRKTTDPCLQRTLYNVLLAYGHHNQGVGYCQGMNFIAGYLILITNNEEESFWLLDALVGRILPDYYSPAMLGLKTDQEVLGELVRAKLPAVGALMERLGVLWTLLVSRWFICLFVDILPVETVLRIWDCLFNEGSKIIFRVALTLIKQHQELILEATSVPDICDKFKQITKGSFVMECHTFMQKIFSEPGSLSMATVAKLRESCRARLLAQG.

The Rab-GAP TBC domain occupies 68-258 (GVPLEHRARV…RIWDCLFNEG (191 aa)).

May act as a GTPase-activating protein for Rab family protein(s). In Homo sapiens (Human), this protein is Growth hormone-regulated TBC protein 1 (GRTP1).